The following is a 131-amino-acid chain: UPF0102 protein AZC_4471 (131 aa).

This sequence belongs to the UPF0102 family.

In Azorhizobium caulinodans (strain ATCC 43989 / DSM 5975 / JCM 20966 / LMG 6465 / NBRC 14845 / NCIMB 13405 / ORS 571), this protein is UPF0102 protein AZC_4471.